The following is a 138-amino-acid chain: Cyclin-dependent kinase 4 inhibitor B (138 aa).

Residues 13 to 39 (GSDEGLASAAARGLVEKVRQLLEAGAD) form an ANK 1; truncated repeat. ANK repeat units lie at residues 46 to 74 (FGRR…EPNC), 79 to 108 (TLTR…RLDV), and 112 to 138 (WGRL…ATGD).

It belongs to the CDKN2 cyclin-dependent kinase inhibitor family. In terms of assembly, heterodimer of CDKN2B with CDK4 or CDK6. Isoform 2 does not interact with CDK4 nor CDK6. Isoform 2 is expressed in normal (keratinocytes, fibroblasts) and tumor cell lines.

The protein localises to the cytoplasm. In terms of biological role, interacts strongly with CDK4 and CDK6. Potent inhibitor. Potential effector of TGF-beta induced cell cycle arrest. In Homo sapiens (Human), this protein is Cyclin-dependent kinase 4 inhibitor B (CDKN2B).